Here is a 195-residue protein sequence, read N- to C-terminus: Segregation and condensation protein B (195 aa).

The protein belongs to the ScpB family. In terms of assembly, homodimer. Homodimerization may be required to stabilize the binding of ScpA to the Smc head domains. Component of a cohesin-like complex composed of ScpA, ScpB and the Smc homodimer, in which ScpA and ScpB bind to the head domain of Smc. The presence of the three proteins is required for the association of the complex with DNA.

It localises to the cytoplasm. Participates in chromosomal partition during cell division. May act via the formation of a condensin-like complex containing Smc and ScpA that pull DNA away from mid-cell into both cell halves. The polypeptide is Segregation and condensation protein B (Clostridium perfringens (strain SM101 / Type A)).